A 497-amino-acid chain; its full sequence is Glycerol kinase (497 aa).

Thr21 provides a ligand contact to ADP. Positions 21 and 22 each coordinate ATP. Residue Thr21 participates in sn-glycerol 3-phosphate binding. Arg25 serves as a coordination point for ADP. Sn-glycerol 3-phosphate is bound by residues Arg88, Glu89, Tyr140, and Asp244. Arg88, Glu89, Tyr140, Asp244, and Gln245 together coordinate glycerol. ADP contacts are provided by Thr266 and Gly309. Positions 266, 309, 313, and 410 each coordinate ATP. Residues Gly410 and Asn414 each coordinate ADP.

It belongs to the FGGY kinase family.

The enzyme catalyses glycerol + ATP = sn-glycerol 3-phosphate + ADP + H(+). The protein operates within polyol metabolism; glycerol degradation via glycerol kinase pathway; sn-glycerol 3-phosphate from glycerol: step 1/1. Its activity is regulated as follows. Inhibited by fructose 1,6-bisphosphate (FBP). Functionally, key enzyme in the regulation of glycerol uptake and metabolism. Catalyzes the phosphorylation of glycerol to yield sn-glycerol 3-phosphate. The protein is Glycerol kinase of Gloeobacter violaceus (strain ATCC 29082 / PCC 7421).